Consider the following 562-residue polypeptide: MRPEPGGCCCRRTVRANGCVANGEVRNGYVRSSAAAAAAAAAGQIHHVTQNGGLYKRPFNEAFEETPMLVAVLTYVGYGVLTLFGYLRDFLRYWRIEKCHHATEREEQKDFVSLYQDFENFYTRNLYMRIRDNWNRPICSVPGARVDIMERQSHDYNWSFKYTGNIIKGVINMGSYNYLGFARNTGSCQEAAAKVLEEYGAGVCSTRQEIGNLDKHEELEELVARFLGVEAAMAYGMGFATNSMNIPALVGKGCLILSDELNHASLVLGARLSGATIRIFKHNNMQSLEKLLKDAIVYGQPRTRRPWKKILILVEGIYSMEGSIVRLPEVIALKKKYKAYLYLDEAHSIGALGPTGRGVVEYFGLDPEDVDVMMGTFTKSFGASGGYIGGKKELIDYLRTHSHSAVYATSLSPPVVEQIITSMKCIMGQDGTSLGKECVQQLAENTRYFRRRLKEMGFIIYGNEDSPVVPLMLYMPAKIGAFGREMLKRNIGVVVVGFPATPIIESRARFCLSAAHTKEILDTALKEIDEVGDLLQLKYSRHRLVPLLDRPFDETTYEETED.

The helical transmembrane segment at 67–87 (PMLVAVLTYVGYGVLTLFGYL) threads the bilayer. The residue at position 379 (lysine 379) is an N6-(pyridoxal phosphate)lysine.

Belongs to the class-II pyridoxal-phosphate-dependent aminotransferase family. In terms of assembly, component of the serine palmitoyltransferase (SPT) complex, which is composed of SPTLC1, SPTLC2 or SPTLC3 and SPTSSA or SPTSSB. The heterodimer consisting of SPTLC1 and SPTLC2/SPTLC3 forms the catalytic core of the enzyme, while SPTSSA or SPTSSB subunits determine substrate specificity. SPT also interacts with ORMDL proteins, especially ORMDL3, which negatively regulate SPT activity in the presence of ceramides. Forms dimers of heterodimers with SPTLC1. The cofactor is pyridoxal 5'-phosphate. In terms of tissue distribution, widely expressed.

The protein localises to the endoplasmic reticulum membrane. The catalysed reaction is L-serine + hexadecanoyl-CoA + H(+) = 3-oxosphinganine + CO2 + CoA. It catalyses the reaction octadecanoyl-CoA + L-serine + H(+) = 3-oxoeicosasphinganine + CO2 + CoA. Its pathway is lipid metabolism; sphingolipid metabolism. With respect to regulation, SPT complex catalytic activity is negatively regulated by ORMDL proteins, including ORMDL3, in the presence of ceramides. This mechanism allows to maintain ceramide levels at sufficient concentrations for the production of complex sphingolipids, but which prevents the accumulation of ceramides to levels that trigger apoptosis. Functionally, component of the serine palmitoyltransferase multisubunit enzyme (SPT) that catalyzes the initial and rate-limiting step in sphingolipid biosynthesis by condensing L-serine and activated acyl-CoA (most commonly palmitoyl-CoA) to form long-chain bases. The SPT complex is composed of SPTLC1, SPTLC2 or SPTLC3 and SPTSSA or SPTSSB. Within this complex, the heterodimer consisting of SPTLC1 and SPTLC2/SPTLC3 forms the catalytic core. The composition of the serine palmitoyltransferase (SPT) complex determines the substrate preference. The SPTLC1-SPTLC2-SPTSSA complex shows a strong preference for C16-CoA substrate, while the SPTLC1-SPTLC3-SPTSSA isozyme uses both C14-CoA and C16-CoA as substrates, with a slight preference for C14-CoA. The SPTLC1-SPTLC2-SPTSSB complex shows a strong preference for C18-CoA substrate, while the SPTLC1-SPTLC3-SPTSSB isozyme displays an ability to use a broader range of acyl-CoAs, without apparent preference. Crucial for adipogenesis. This is Serine palmitoyltransferase 2 from Homo sapiens (Human).